Here is a 160-residue protein sequence, read N- to C-terminus: Urease accessory protein UreE (160 aa).

The protein belongs to the UreE family.

The protein localises to the cytoplasm. In terms of biological role, involved in urease metallocenter assembly. Binds nickel. Probably functions as a nickel donor during metallocenter assembly. This is Urease accessory protein UreE from Acinetobacter baumannii (strain ACICU).